Consider the following 462-residue polypeptide: tRNA modification GTPase MnmE (462 aa).

(6S)-5-formyl-5,6,7,8-tetrahydrofolate-binding residues include arginine 34, glutamate 92, and lysine 131. The TrmE-type G domain occupies glycine 227 to glycine 386. Asparagine 237 provides a ligand contact to K(+). Residues asparagine 237–serine 242, threonine 256–threonine 262, and aspartate 281–glycine 284 contribute to the GTP site. Position 241 (serine 241) interacts with Mg(2+). K(+) contacts are provided by threonine 256, isoleucine 258, and threonine 261. Residue threonine 262 coordinates Mg(2+). A (6S)-5-formyl-5,6,7,8-tetrahydrofolate-binding site is contributed by lysine 462.

The protein belongs to the TRAFAC class TrmE-Era-EngA-EngB-Septin-like GTPase superfamily. TrmE GTPase family. Homodimer. Heterotetramer of two MnmE and two MnmG subunits. Requires K(+) as cofactor.

It is found in the cytoplasm. In terms of biological role, exhibits a very high intrinsic GTPase hydrolysis rate. Involved in the addition of a carboxymethylaminomethyl (cmnm) group at the wobble position (U34) of certain tRNAs, forming tRNA-cmnm(5)s(2)U34. This chain is tRNA modification GTPase MnmE, found in Acinetobacter baylyi (strain ATCC 33305 / BD413 / ADP1).